We begin with the raw amino-acid sequence, 248 residues long: Ubiquinone/menaquinone biosynthesis C-methyltransferase UbiE (248 aa).

S-adenosyl-L-methionine is bound by residues serine 68 and aspartate 92.

It belongs to the class I-like SAM-binding methyltransferase superfamily. MenG/UbiE family.

It catalyses the reaction a 2-demethylmenaquinol + S-adenosyl-L-methionine = a menaquinol + S-adenosyl-L-homocysteine + H(+). The catalysed reaction is a 2-methoxy-6-(all-trans-polyprenyl)benzene-1,4-diol + S-adenosyl-L-methionine = a 5-methoxy-2-methyl-3-(all-trans-polyprenyl)benzene-1,4-diol + S-adenosyl-L-homocysteine + H(+). It functions in the pathway quinol/quinone metabolism; menaquinone biosynthesis; menaquinol from 1,4-dihydroxy-2-naphthoate: step 2/2. The protein operates within cofactor biosynthesis; ubiquinone biosynthesis. In terms of biological role, methyltransferase required for the conversion of demethylmenaquinol (DMKH2) to menaquinol (MKH2) and the conversion of 2-polyprenyl-6-methoxy-1,4-benzoquinol (DDMQH2) to 2-polyprenyl-3-methyl-6-methoxy-1,4-benzoquinol (DMQH2). The chain is Ubiquinone/menaquinone biosynthesis C-methyltransferase UbiE from Rickettsia massiliae (strain Mtu5).